The sequence spans 622 residues: Chaperone protein HscA homolog (622 aa).

This sequence belongs to the heat shock protein 70 family.

In terms of biological role, chaperone involved in the maturation of iron-sulfur cluster-containing proteins. Has a low intrinsic ATPase activity which is markedly stimulated by HscB. This is Chaperone protein HscA homolog from Burkholderia cenocepacia (strain HI2424).